A 419-amino-acid polypeptide reads, in one-letter code: NF-kappa-B essential modulator (419 aa).

The segment at 1–48 is disordered; sequence MSRPPWKSPLCEMVQPSGSPAGDQDMLGEESSLGKPAMLHVPSEQGTP. The required for interaction with and ubiquitination by MARCHF2 stretch occupies residues 1–197; sequence MSRPPWKSPL…REALEQRHSV (197 aa). Ser31 and Ser43 each carry phosphoserine; by IKKB. Positions 44-111 are interaction with CHUK/IKBKB; the sequence is EQGTPETFQR…DLVVRLSLEK (68 aa). The stretch at 49–353 forms a coiled coil; sequence ETFQRCLEEN…KTSCQESARI (305 aa). Phosphoserine is present on Ser68. Residues Lys111, Lys139, Lys143, Lys226, Lys246, and Lys264 each participate in a glycyl lysine isopeptide (Lys-Gly) (interchain with G-Cter in ubiquitin) cross-link. Residues 150 to 257 form an interaction with TANK region; that stretch reads LGELQESQSR…SMVSSERNRG (108 aa). The interval 242–350 is ubiquitin-binding (UBAN); the sequence is DNHMKSSMVS…SRLKTSCQES (109 aa). The self-association stretch occupies residues 246-365; the sequence is KSSMVSSERN…MRKRHVEVSQ (120 aa). Residues 251 to 419 are required for interaction with TNFAIP3; that stretch reads SSERNRGLQL…LQIHVMECIE (169 aa). Residue Lys277 forms a Glycyl lysine isopeptide (Lys-Gly) (interchain with G-Cter in SUMO); alternate linkage. Lys277 is covalently cross-linked (Glycyl lysine isopeptide (Lys-Gly) (interchain with G-Cter in ubiquitin); alternate). Residues Lys283, Lys285, Lys292, and Lys302 each participate in a glycyl lysine isopeptide (Lys-Gly) (interchain with G-Cter in ubiquitin) cross-link. Lys309 participates in a covalent cross-link: Glycyl lysine isopeptide (Lys-Gly) (interchain with G-Cter in SUMO); alternate. A Glycyl lysine isopeptide (Lys-Gly) (interchain with G-Cter in ubiquitin); alternate cross-link involves residue Lys309. Glycyl lysine isopeptide (Lys-Gly) (interchain with G-Cter in ubiquitin) cross-links involve residues Lys321, Lys325, and Lys326. The interval 322 to 343 is leucine-zipper; sequence LAEKKEFLQEQLEQLQREYSRL. The disordered stretch occupies residues 356–394; it reads MRKRHVEVSQPPLAPGPAHHSFHLNPSSQRRSPPDEPPK. Ser376 bears the Phosphoserine; by IKKB mark. Positions 382–419 are interaction with CYLD; the sequence is SSQRRSPPDEPPKFCCPKCQYQAPDIDTLQIHVMECIE. At Ser387 the chain carries Phosphoserine. A CCHC NOA-type zinc finger spans residues 389 to 419; that stretch reads PDEPPKFCCPKCQYQAPDIDTLQIHVMECIE. Cys397 is a Zn(2+) binding site. Lys399 is covalently cross-linked (Glycyl lysine isopeptide (Lys-Gly) (interchain with G-Cter in ubiquitin)). Residues Cys400, His413, and Cys417 each coordinate Zn(2+).

In terms of assembly, homodimer; disulfide-linked. Component of the I-kappa-B-kinase (IKK) core complex consisting of CHUK, IKBKB and IKBKG; probably four alpha/CHUK-beta/IKBKB dimers are associated with four gamma/IKBKG subunits. The IKK core complex seems to associate with regulatory or adapter proteins to form a IKK-signalosome holo-complex. The IKK complex associates with TERF2IP/RAP1, leading to promote IKK-mediated phosphorylation of RELA/p65. Part of a complex composed of NCOA2, NCOA3, CHUK/IKKA, IKBKB, IKBKG and CREBBP. Interacts with COPS3, CYLD, NALP2, TRPC4AP and PIDD1. Interacts with ATM; the complex is exported from the nucleus. Interacts with TRAF6. Interacts with IKBKE. Interacts with TANK; the interaction is enhanced by IKBKE and TBK1. Part of a ternary complex consisting of TANK, IKBKB and IKBKG. Interacts with ZFAND5. Interacts with RIPK2. Interacts with TNIP1 and TNFAIP3; TNIP1 facilitates the TNFAIP3-mediated de-ubiquitination of IKBKG. Interacts with TNFAIP3; the interaction is induced by TNF stimulation and by polyubiquitin. Binds (via UBAN region) polyubiquitin; binds both 'Lys-63'-linked and linear polyubiquitin, with higher affinity for linear ubiquitin. Interacts with NLRP10. Interacts with TANK; this interaction increases in response to DNA damage. Interacts with USP10; this interaction increases in response to DNA damage. Interacts with ZC3H12A; this interaction increases in response to DNA damage. Interacts with IFIT5; the interaction synergizes the recruitment of IKK to MAP3K7 and enhances IKK phosphorylation. Interacts with TRIM29; this interaction induces IKBKG/NEMO ubiquitination and proteolytic degradation. Interacts with TRIM13; this interaction leads to IKBKG/NEMO ubiquitination. Interacts with ARFIP2. Interacts with RIPK1. Interacts with (ubiquitinated) BCL10; interaction with polyubiquitinated BCL10 via both 'Lys-63'-linked and linear ubiquitin is required for TCR-induced NF-kappa-B activation. Interacts with MARCHF2; during the late stages of macrophage viral and bacterial infection; the interaction leads to ubiquitination and degradation of IKBKG/NEMO. Phosphorylation at Ser-68 attenuates aminoterminal homodimerization. Post-translationally, polyubiquitinated on Lys-285 through 'Lys-63'; the ubiquitination is mediated downstream of NOD2 and RIPK2 and probably plays a role in signaling by facilitating interactions with ubiquitin domain-containing proteins and activates the NF-kappa-B pathway. Polyubiquitinated on Lys-399 through 'Lys-63'; the ubiquitination is mediated by BCL10, MALT1 and TRAF6 and probably plays a role in signaling by facilitating interactions with ubiquitin domain-containing proteins and activates the NF-kappa-B pathway. Monoubiquitinated on Lys-277 and Lys-309; promotes nuclear export. Polyubiquitinated through 'Lys-27' by TRIM23; involved in antiviral innate and inflammatory responses. Linear polyubiquitinated on Lys-111, Lys-143, Lys-226, Lys-246, Lys-264, Lys-277, Lys-285, Lys-292, Lys-302, Lys-309 and Lys-326; the head-to-tail polyubiquitination is mediated by the LUBAC complex and plays a key role in NF-kappa-B activation. Deubiquitinated by USP10 in a TANK-dependent and -independent manner, leading to the negative regulation of NF-kappa-B signaling upon DNA damage. Ubiquitinated at Lys-326 by MARCHF2 following bacterial and viral infection which leads to its degradation. Polyubiquitinated via 'Lys-29'-linked ubiquitin; leading to lysosomal degradation. In terms of processing, sumoylated on Lys-277 and Lys-309 with SUMO1. Neddylated by TRIM40, resulting in stabilization of NFKBIA and down-regulation of NF-kappa-B activity.

It is found in the cytoplasm. Its subcellular location is the nucleus. Regulatory subunit of the IKK core complex which phosphorylates inhibitors of NF-kappa-B thus leading to the dissociation of the inhibitor/NF-kappa-B complex and ultimately the degradation of the inhibitor. Its binding to scaffolding polyubiquitin plays a key role in IKK activation by multiple signaling receptor pathways. Can recognize and bind both 'Lys-63'-linked and linear polyubiquitin upon cell stimulation, with a much highr affinity for linear polyubiquitin. Could be implicated in NF-kappa-B-mediated protection from cytokine toxicity. Essential for viral activation of IRF3. Involved in TLR3- and IFIH1-mediated antiviral innate response; this function requires 'Lys-27'-linked polyubiquitination. The polypeptide is NF-kappa-B essential modulator (IKBKG) (Bos taurus (Bovine)).